Consider the following 641-residue polypeptide: 1-deoxy-D-xylulose-5-phosphate synthase (641 aa).

Thiamine diphosphate-binding positions include histidine 79 and 120-122; that span reads GHS. Residue aspartate 151 coordinates Mg(2+). Thiamine diphosphate is bound by residues 152–153, asparagine 180, tyrosine 291, and glutamate 375; that span reads GS. Residue asparagine 180 coordinates Mg(2+).

The protein belongs to the transketolase family. DXPS subfamily. As to quaternary structure, homodimer. The cofactor is Mg(2+). Thiamine diphosphate is required as a cofactor.

It catalyses the reaction D-glyceraldehyde 3-phosphate + pyruvate + H(+) = 1-deoxy-D-xylulose 5-phosphate + CO2. It participates in metabolic intermediate biosynthesis; 1-deoxy-D-xylulose 5-phosphate biosynthesis; 1-deoxy-D-xylulose 5-phosphate from D-glyceraldehyde 3-phosphate and pyruvate: step 1/1. Its function is as follows. Catalyzes the acyloin condensation reaction between C atoms 2 and 3 of pyruvate and glyceraldehyde 3-phosphate to yield 1-deoxy-D-xylulose-5-phosphate (DXP). This is 1-deoxy-D-xylulose-5-phosphate synthase from Nitratidesulfovibrio vulgaris (strain ATCC 29579 / DSM 644 / CCUG 34227 / NCIMB 8303 / VKM B-1760 / Hildenborough) (Desulfovibrio vulgaris).